The following is an 82-amino-acid chain: uncharacterized protein (82 aa).

The protein localises to the plastid. It is found in the chloroplast. This is an uncharacterized protein from Vicia faba (Broad bean).